A 217-amino-acid chain; its full sequence is Small ribosomal subunit protein uS3 (217 aa).

A KH type-2 domain is found at 29–97 (ADYLHEDLAI…AQLNKLTGKQ (69 aa)).

It belongs to the universal ribosomal protein uS3 family. As to quaternary structure, part of the 30S ribosomal subunit. Forms a tight complex with proteins S10 and S14.

Its function is as follows. Binds the lower part of the 30S subunit head. Binds mRNA in the 70S ribosome, positioning it for translation. This Streptococcus mutans serotype c (strain ATCC 700610 / UA159) protein is Small ribosomal subunit protein uS3.